A 230-amino-acid polypeptide reads, in one-letter code: uncharacterized protein (230 aa).

An N-terminal signal peptide occupies residues 1-22 (MNIRSFLLISIFTAISYLVVDG). Over 23–167 (ATPRTFAPSA…YTPYGGVKAL (145 aa)) the chain is Lumenal. A disordered region spans residues 55-90 (SSSSSSSSISTSHDSQPSTSSSSPSSTSTSSSSGTS). The chain crosses the membrane as a helical span at residues 168 to 188 (IGILVGVVVGSVFLLAIVMVI). At 189–230 (ARIWGPRLLANKDQNNNNEDLDSNLVSKDSEGTPQITYASNF) the chain is on the cytoplasmic side. Positions 208 to 230 (DLDSNLVSKDSEGTPQITYASNF) are disordered.

It is found in the endoplasmic reticulum membrane. This is an uncharacterized protein from Schizosaccharomyces pombe (strain 972 / ATCC 24843) (Fission yeast).